An 84-amino-acid chain; its full sequence is Agaphelin (84 aa).

Positions 1–26 are cleaved as a signal peptide; sequence MKMRVHLLAVSVLLVVLALQTTPAEA. The 54-residue stretch at 29–82 folds into the Kazal-like domain; it reads NSEMATCACQLIYRPVCASNNESYSNECVLKCASETPTGRSIGLHKVKDGNCNG. Cystine bridges form between cysteine 35–cysteine 60, cysteine 37–cysteine 56, and cysteine 45–cysteine 80. N-linked (GlcNAc...) asparagine glycosylation is present at asparagine 49.

In terms of assembly, interacts with human ELANE.

Its subcellular location is the secreted. Its function is as follows. Functions as a slow and tight inhibitor of host neutrophil elastase (ELANE). Inhibits host proteinase 3 (PRTN3) and chymotrypsin. Does not inhibit other host proteases involved in coagulation or inflammation, such as cathepsin G (CTSG), trypsin, chymase, matriptase, beta-tryptase, kallikrein, urokinase-type plasminogen activator (PLAU), coagulation factors Xa (F10), XIa (F11), XIIa (F12), plasmin (PLG), thrombin (F2) and tissue-type plasminogen activator (PLAT). Inhibits host neutrophil chemotaxis induced by N-formylmethionine-leucyl-phenylalanine (fMLP) in vitro. Inhibits ELANE-mediated potentiation of platelet aggregation induced by CTSG in the host. Does not affect CTSG- or collagen-induced platelet aggregation. Blocks cleavage of tissue factor pathway inhibitor (TFPI) by ELANE in the host. Inhibits neutrophil-induced coagulation in the host by interfering with neutrophil extracellular traps (NET) formation. Exhibits anti-inflammatory activity. Reduces ischemia-induced activation of MAPK and NF-kappa-B pathways in the host. Decreases CCL2 and IL8 production in IL4- or lipopolysaccharide (LPS)-stimulated host epithelial cells. Reduces caspase-3 (CASP3)-dependent apoptosis in damaged host tissues. This chain is Agaphelin, found in Anopheles gambiae (African malaria mosquito).